We begin with the raw amino-acid sequence, 306 residues long: MNWITNYVRPKINSILGRREIPENLWIKDPTSGEMIFHKDLEANQFVAPNSGYHMRISAKNRLVHFFDDGVYTALENPKVVTDPLKFRDEKRYIDRLKDYRSKLGVDDNILSARGTIEGLPIIATVQDFAFMGGSLGMASGEAIVKAFDTAIAEKCPLVLFAASGGARMQEGTLSLMQMPRTTVAIEMLKEAKLPYIVVLTNPTTGGVTASYAMLGDIHIAEPGAMIGFAGPRVIQQTIRETLPEGFQSSEYLLEHGMIDMVVSRLEMKTTIARLLRLMMKRPAVVTPSPPSPTDSQTSLSKTKAA.

A CoA carboxyltransferase N-terminal domain is found at 25-294; sequence LWIKDPTSGE…VVTPSPPSPT (270 aa). The segment at 284 to 306 is disordered; that stretch reads AVVTPSPPSPTDSQTSLSKTKAA.

This sequence belongs to the AccD/PCCB family. Acetyl-CoA carboxylase is a heterohexamer composed of biotin carboxyl carrier protein (AccB), biotin carboxylase (AccC) and two subunits each of ACCase subunit alpha (AccA) and ACCase subunit beta (AccD).

Its subcellular location is the cytoplasm. The enzyme catalyses N(6)-carboxybiotinyl-L-lysyl-[protein] + acetyl-CoA = N(6)-biotinyl-L-lysyl-[protein] + malonyl-CoA. Its pathway is lipid metabolism; malonyl-CoA biosynthesis; malonyl-CoA from acetyl-CoA: step 1/1. In terms of biological role, component of the acetyl coenzyme A carboxylase (ACC) complex. Biotin carboxylase (BC) catalyzes the carboxylation of biotin on its carrier protein (BCCP) and then the CO(2) group is transferred by the transcarboxylase to acetyl-CoA to form malonyl-CoA. This chain is Acetyl-coenzyme A carboxylase carboxyl transferase subunit beta, found in Bartonella tribocorum (strain CIP 105476 / IBS 506).